A 515-amino-acid polypeptide reads, in one-letter code: ATP synthase subunit alpha (515 aa).

171–178 is an ATP binding site; it reads GDRQTGKT.

The protein belongs to the ATPase alpha/beta chains family. In terms of assembly, F-type ATPases have 2 components, CF(1) - the catalytic core - and CF(0) - the membrane proton channel. CF(1) has five subunits: alpha(3), beta(3), gamma(1), delta(1), epsilon(1). CF(0) has three main subunits: a(1), b(2) and c(9-12). The alpha and beta chains form an alternating ring which encloses part of the gamma chain. CF(1) is attached to CF(0) by a central stalk formed by the gamma and epsilon chains, while a peripheral stalk is formed by the delta and b chains.

It localises to the cell inner membrane. The enzyme catalyses ATP + H2O + 4 H(+)(in) = ADP + phosphate + 5 H(+)(out). In terms of biological role, produces ATP from ADP in the presence of a proton gradient across the membrane. The alpha chain is a regulatory subunit. The protein is ATP synthase subunit alpha of Xanthomonas axonopodis pv. citri (strain 306).